The following is a 336-amino-acid chain: MLSYAPENAYQRASTMENKKVFPKEKSGLHPRNRHCSRYDFDALSVSCPELIPFLAPTAYGDISVDFADPLAVKMLNKALLKHFYGIEYWDIPADSLCPPIPGRADYVHHLADLLASCNGEVIPKGKNIALLDIGVGANCIYPIIGQREYGWRFTGTDIDSHALSAAKMVVSMNPTLKNTLRLKQQKDPHAIFEGVWAVNERYDATLCNPPFHGSAEEAAATTRRKLHKLGKNEVAAKPVQNFGGKNSELWCEGGEEGFVSRMVAESVAKAQNCFWFTSLISKKTTLPAIYHALRYVKAVEVRTIEMAQGQKVSRFVAWTFLTPEQQAAWVAERWA.

Belongs to the methyltransferase superfamily. METTL16/RlmF family.

It is found in the cytoplasm. It catalyses the reaction adenosine(1618) in 23S rRNA + S-adenosyl-L-methionine = N(6)-methyladenosine(1618) in 23S rRNA + S-adenosyl-L-homocysteine + H(+). Functionally, specifically methylates the adenine in position 1618 of 23S rRNA. This chain is Ribosomal RNA large subunit methyltransferase F, found in Yersinia pestis bv. Antiqua (strain Nepal516).